The chain runs to 57 residues: Myrmicitoxin(1)-Pm7a (57 aa).

An N-terminal signal peptide occupies residues 1–23; the sequence is MMKIIYAFLLIAVVAFMGSGIMA. A propeptide spanning residues 24–31 is cleaved from the precursor; sequence EPLAEAIA.

The protein belongs to the formicidae venom clade 4 family. Expressed by the venom gland.

It localises to the secreted. In terms of biological role, probable neurotoxin. This is Myrmicitoxin(1)-Pm7a from Pogonomyrmex maricopa (Maricopa harvester ant).